The sequence spans 308 residues: MARSGRNAPPSGISGADAPSKLHTLIDDFCEHLDLVVGRSAATIRGYRSDLYAMADTIEDIDNFSLPTLRQWLGIAVDEGKSRATLARRTASVKAFSSWAQKNGHLKADEAARLISPKITRDLPKILGEQQAGDFVENAASTNEEEFLRDSAILELLYATGMRVAELCGIDLSDIDYDRKMVRVLGKGNKERVVPFGESAHKALRNWLDVRDEMTEDPKALFVGVRGQRINARQVRRIVDRAAKVTGVDHLSPHSLRHTAATHLLDGGADLRQVQELLGHSSMQTTQIYTHVSNKRLLEAFNKAHPRA.

The Core-binding (CB) domain maps to 20–101 (SKLHTLIDDF…SVKAFSSWAQ (82 aa)). A Tyr recombinase domain is found at 122–302 (DLPKILGEQQ…SNKRLLEAFN (181 aa)). Active-site residues include arginine 163, lysine 187, histidine 254, arginine 257, and histidine 280. Tyrosine 289 acts as the O-(3'-phospho-DNA)-tyrosine intermediate in catalysis.

The protein belongs to the 'phage' integrase family. XerC subfamily. Forms a cyclic heterotetrameric complex composed of two molecules of XerC and two molecules of XerD.

The protein localises to the cytoplasm. Its function is as follows. Site-specific tyrosine recombinase, which acts by catalyzing the cutting and rejoining of the recombining DNA molecules. The XerC-XerD complex is essential to convert dimers of the bacterial chromosome into monomers to permit their segregation at cell division. It also contributes to the segregational stability of plasmids. The sequence is that of Tyrosine recombinase XerC from Corynebacterium glutamicum (strain ATCC 13032 / DSM 20300 / JCM 1318 / BCRC 11384 / CCUG 27702 / LMG 3730 / NBRC 12168 / NCIMB 10025 / NRRL B-2784 / 534).